Consider the following 520-residue polypeptide: Glucose-1-phosphate adenylyltransferase small subunit, chloroplastic (520 aa).

The transit peptide at 1 to 71 (MASVSAIGVL…RNPIIVSPKA (71 aa)) directs the protein to the chloroplast.

It belongs to the bacterial/plant glucose-1-phosphate adenylyltransferase family. In terms of assembly, heterotetramer. Leaves.

The protein resides in the plastid. Its subcellular location is the chloroplast. It carries out the reaction alpha-D-glucose 1-phosphate + ATP + H(+) = ADP-alpha-D-glucose + diphosphate. The protein operates within glycan biosynthesis; starch biosynthesis. Activated by 3'phosphoglycerate, inhibited by orthophosphate. Allosteric regulation. Functionally, this protein plays a role in synthesis of starch. It catalyzes the synthesis of the activated glycosyl donor, ADP-glucose from Glc-1-P and ATP. The sequence is that of Glucose-1-phosphate adenylyltransferase small subunit, chloroplastic (APS1) from Arabidopsis thaliana (Mouse-ear cress).